The chain runs to 194 residues: Protein GrpE (194 aa).

Over residues 1-24 (MEEKDKEEKVTGENLEPEDKNLEQ) the composition is skewed to basic and acidic residues. The disordered stretch occupies residues 1 to 41 (MEEKDKEEKVTGENLEPEDKNLEQEDKEEVVGPQEEQQIDE).

It belongs to the GrpE family. In terms of assembly, homodimer.

The protein localises to the cytoplasm. In terms of biological role, participates actively in the response to hyperosmotic and heat shock by preventing the aggregation of stress-denatured proteins, in association with DnaK and GrpE. It is the nucleotide exchange factor for DnaK and may function as a thermosensor. Unfolded proteins bind initially to DnaJ; upon interaction with the DnaJ-bound protein, DnaK hydrolyzes its bound ATP, resulting in the formation of a stable complex. GrpE releases ADP from DnaK; ATP binding to DnaK triggers the release of the substrate protein, thus completing the reaction cycle. Several rounds of ATP-dependent interactions between DnaJ, DnaK and GrpE are required for fully efficient folding. This Carboxydothermus hydrogenoformans (strain ATCC BAA-161 / DSM 6008 / Z-2901) protein is Protein GrpE.